Consider the following 521-residue polypeptide: Acetyl-CoA hydrolase (521 aa).

CoA is bound at residue 276–280 (GIGNI). Glu-301 acts as the 5-glutamyl coenzyme A thioester intermediate in catalysis. Asn-391 and Gly-395 together coordinate CoA.

This sequence belongs to the acetyl-CoA hydrolase/transferase family.

It is found in the cytoplasm. The enzyme catalyses acetyl-CoA + H2O = acetate + CoA + H(+). Presumably involved in regulating the intracellular acetyl-CoA pool for fatty acid and cholesterol synthesis and fatty acid oxidation. In Schizosaccharomyces pombe (strain 972 / ATCC 24843) (Fission yeast), this protein is Acetyl-CoA hydrolase (ach1).